The chain runs to 513 residues: MSLLTTVLLLWGFTLGPGNALWLDSGSEPELRAEPQSLLEPWANLTLVCAVDLPTKVFELIMNGWFLSQVRLETPVLSYRFSLGAITSNNSGVYRCRCGVEPPVDIQLPALSKWTMLSNALEVTGKEPLPPPSAHADPVSWITPGGLPVYIMCRVAMRGVTYLLRKEGVDGTQKPDVQHKGTAGFLIYKPGNYSCSYLTHAGGKPSEPSAIVTIKMSATQLPPSLCLMGSYLTIYPQKTHETLACKAPRNAAEFQLRQGERVLNIQGFSPTRDATIYYVNLKELDNQSPFTCRYRMHKYMHVWSEDSKPVELMWSDEKLPAPVLTAEPSSHNLEPGSTVQLRCTAHKAGLRFGLQRQGKPDLVVVQMLNSSGTEAVFELHNISTIDSGNYSCIYMEQAPPFSGSASSEPLELRINGPAPKPRLEALWKGKVPLGHEAIFQCHGHVPRVSMELVREGFKTPFWMASTTSTSAFLKLSFVGPQHTGNYSCRYTALSPFTFESGISDPVEVVVEGS.

The first 20 residues, 1-20 (MSLLTTVLLLWGFTLGPGNA), serve as a signal peptide directing secretion. Ig-like V-type domains are found at residues 22-126 (WLDS…VTGK), 127-219 (EPLP…MSAT), 220-312 (QLPP…PVEL), 313-415 (MWSD…LRIN), and 416-513 (GPAP…VEGS). N-linked (GlcNAc...) asparagine glycosylation is found at asparagine 44, asparagine 89, and asparagine 192. Intrachain disulfides connect cysteine 49-cysteine 96, cysteine 153-cysteine 195, cysteine 245-cysteine 292, cysteine 343-cysteine 392, and cysteine 441-cysteine 488. Asparagine 369, asparagine 381, asparagine 389, and asparagine 485 each carry an N-linked (GlcNAc...) asparagine glycan.

In terms of assembly, interacts with CRISP3. In terms of tissue distribution, isoform 1 is expressed in normal liver. Isoform 2 is expressed in the regenerating liver after partial hepatectomy and at very low levels in the normal lung, brain and testis.

Its subcellular location is the secreted. In Rattus norvegicus (Rat), this protein is Alpha-1B-glycoprotein.